The sequence spans 385 residues: Tryptophan--tRNA ligase (385 aa).

Positions 82–90 (PSGPMHIGH) match the 'HIGH' region motif. The short motif at 253 to 257 (KMSAS) is the 'KMSKS' region element.

It belongs to the class-I aminoacyl-tRNA synthetase family.

The protein resides in the cytoplasm. The catalysed reaction is tRNA(Trp) + L-tryptophan + ATP = L-tryptophyl-tRNA(Trp) + AMP + diphosphate + H(+). The polypeptide is Tryptophan--tRNA ligase (Pyrococcus abyssi (strain GE5 / Orsay)).